Consider the following 391-residue polypeptide: Formate-dependent phosphoribosylglycinamide formyltransferase (391 aa).

N(1)-(5-phospho-beta-D-ribosyl)glycinamide-binding positions include 18 to 19 and Glu78; that span reads EL. ATP-binding positions include Arg110, Lys151, 156-161, 191-194, and Glu199; these read SSGKGQ and EEFI. The ATP-grasp domain maps to 115-305; the sequence is ELVSRDLKIK…EFELHLRAFL (191 aa). Positions 264 and 276 each coordinate Mg(2+). N(1)-(5-phospho-beta-D-ribosyl)glycinamide contacts are provided by residues Asp283, Lys353, and 360 to 361; that span reads RR.

The protein belongs to the PurK/PurT family. As to quaternary structure, homodimer.

The catalysed reaction is N(1)-(5-phospho-beta-D-ribosyl)glycinamide + formate + ATP = N(2)-formyl-N(1)-(5-phospho-beta-D-ribosyl)glycinamide + ADP + phosphate + H(+). Its pathway is purine metabolism; IMP biosynthesis via de novo pathway; N(2)-formyl-N(1)-(5-phospho-D-ribosyl)glycinamide from N(1)-(5-phospho-D-ribosyl)glycinamide (formate route): step 1/1. In terms of biological role, involved in the de novo purine biosynthesis. Catalyzes the transfer of formate to 5-phospho-ribosyl-glycinamide (GAR), producing 5-phospho-ribosyl-N-formylglycinamide (FGAR). Formate is provided by PurU via hydrolysis of 10-formyl-tetrahydrofolate. The protein is Formate-dependent phosphoribosylglycinamide formyltransferase of Prochlorococcus marinus (strain MIT 9312).